The primary structure comprises 37 residues: Cytochrome b6-f complex subunit 5 (37 aa).

The helical transmembrane segment at 5–25 (LLSGIILGLIPITICGLFFTA) threads the bilayer.

This sequence belongs to the PetG family. In terms of assembly, the 4 large subunits of the cytochrome b6-f complex are cytochrome b6, subunit IV (17 kDa polypeptide, PetD), cytochrome f and the Rieske protein, while the 4 small subunits are PetG, PetL, PetM and PetN. The complex functions as a dimer.

Its subcellular location is the plastid. It localises to the chloroplast thylakoid membrane. Functionally, component of the cytochrome b6-f complex, which mediates electron transfer between photosystem II (PSII) and photosystem I (PSI), cyclic electron flow around PSI, and state transitions. PetG is required for either the stability or assembly of the cytochrome b6-f complex. The sequence is that of Cytochrome b6-f complex subunit 5 from Euglena gracilis.